We begin with the raw amino-acid sequence, 111 residues long: UPF0321 protein P20C8.02c (111 aa).

Residues 1-17 (MLLLFCICCVFIKLVLA) form the signal peptide. N-linked (GlcNAc...) asparagine glycosylation occurs at Asn20.

This sequence belongs to the UPF0321 family.

This chain is UPF0321 protein P20C8.02c, found in Schizosaccharomyces pombe (strain 972 / ATCC 24843) (Fission yeast).